The sequence spans 243 residues: Aspartate/glutamate leucyltransferase (243 aa).

This sequence belongs to the R-transferase family. Bpt subfamily.

It localises to the cytoplasm. It carries out the reaction N-terminal L-glutamyl-[protein] + L-leucyl-tRNA(Leu) = N-terminal L-leucyl-L-glutamyl-[protein] + tRNA(Leu) + H(+). The catalysed reaction is N-terminal L-aspartyl-[protein] + L-leucyl-tRNA(Leu) = N-terminal L-leucyl-L-aspartyl-[protein] + tRNA(Leu) + H(+). Functions in the N-end rule pathway of protein degradation where it conjugates Leu from its aminoacyl-tRNA to the N-termini of proteins containing an N-terminal aspartate or glutamate. The chain is Aspartate/glutamate leucyltransferase from Teredinibacter turnerae (strain ATCC 39867 / T7901).